Consider the following 571-residue polypeptide: PHD and RING finger domain-containing protein C126.07c (571 aa).

The RING-type 1; atypical zinc-finger motif lies at 18–79; it reads CIICLSNLPN…RVANTCPLCR (62 aa). The PHD-type zinc-finger motif lies at 122–170; it reads TCRCVICGRSDHAEVLLLCDGCDDAYHTYCLNMDAVPIEEFYCPNCVLL. Residues 125–168 form an RING-type 2; degenerate zinc finger; it reads CVICGRSDHAEVLLLCDGCDDAYHTYCLNMDAVPIEEFYCPNCV. Over residues 305–324 the composition is skewed to polar residues; that stretch reads ATEATISNPRPSSGRFQQTP. Residues 305–377 form a disordered region; the sequence is ATEATISNPR…VLGNNSSSKS (73 aa). Residues 346–356 are compositionally biased toward basic residues; that stretch reads RRQKRPTRRHI. The segment covering 359–377 has biased composition (polar residues); the sequence is SNKSSGSSTVLGNNSSSKS.

The protein localises to the cytoplasm. Its subcellular location is the nucleus. The chain is PHD and RING finger domain-containing protein C126.07c from Schizosaccharomyces pombe (strain 972 / ATCC 24843) (Fission yeast).